The primary structure comprises 447 residues: Glucose-6-phosphate isomerase (447 aa).

The active-site Proton donor is E289. Active-site residues include H310 and K424.

This sequence belongs to the GPI family.

The protein localises to the cytoplasm. The enzyme catalyses alpha-D-glucose 6-phosphate = beta-D-fructose 6-phosphate. Its pathway is carbohydrate biosynthesis; gluconeogenesis. It participates in carbohydrate degradation; glycolysis; D-glyceraldehyde 3-phosphate and glycerone phosphate from D-glucose: step 2/4. Its function is as follows. Catalyzes the reversible isomerization of glucose-6-phosphate to fructose-6-phosphate. This chain is Glucose-6-phosphate isomerase, found in Parabacteroides distasonis (strain ATCC 8503 / DSM 20701 / CIP 104284 / JCM 5825 / NCTC 11152).